The following is a 400-amino-acid chain: PHD finger protein 24 (400 aa).

The N-myristoyl glycine moiety is linked to residue glycine 2. Residues 29–38 are compositionally biased toward basic and acidic residues; the sequence is RDRPSIRRGG. Positions 29-65 are disordered; the sequence is RDRPSIRRGGELPGSRRGTVEGSVQEVQEEKEAEASA. Arginine 36 is subject to Omega-N-methylarginine. Position 43 is a phosphoserine (serine 43). Threonine 47 is modified (phosphothreonine). Phosphoserine is present on serine 51. Residues 129–190 form a PHD-type zinc finger; the sequence is NDEMCDVCEV…TGWSCYYCDN (62 aa). At arginine 307 the chain carries Omega-N-methylarginine.

The protein is PHD finger protein 24 of Mus musculus (Mouse).